A 141-amino-acid polypeptide reads, in one-letter code: Hemoglobin subunit alpha (141 aa).

The region spanning 1 to 141 (VLSPADKTNV…VSTVLTSKYR (141 aa)) is the Globin domain. At S3 the chain carries Phosphoserine. K7 bears the N6-succinyllysine mark. T8 carries the phosphothreonine modification. K11 carries the post-translational modification N6-succinyllysine. K16 carries the post-translational modification N6-acetyllysine; alternate. Position 16 is an N6-succinyllysine; alternate (K16). S35 carries the phosphoserine modification. At K40 the chain carries N6-succinyllysine. Residue H58 participates in O2 binding. Residue H87 coordinates heme b. Phosphoserine is present on S102. A Phosphothreonine modification is found at T108. S124 and S131 each carry phosphoserine. Phosphothreonine occurs at positions 134 and 137. At S138 the chain carries Phosphoserine.

This sequence belongs to the globin family. As to quaternary structure, heterotetramer of two alpha chains and two beta chains. In terms of tissue distribution, red blood cells.

Involved in oxygen transport from the lung to the various peripheral tissues. Functionally, hemopressin acts as an antagonist peptide of the cannabinoid receptor CNR1. Hemopressin-binding efficiently blocks cannabinoid receptor CNR1 and subsequent signaling. The polypeptide is Hemoglobin subunit alpha (HBA) (Physeter macrocephalus (Sperm whale)).